The following is a 627-amino-acid chain: (-)-beta-pinene synthase 2, chloroplastic (627 aa).

A chloroplast-targeting transit peptide spans 1 to 51 (MDLISVLPSASKSCVCLHKPLSSSTHKLKPFCRKIRILGMPRPRKSVLMVS). Mg(2+) is bound by residues Asp-378, Asp-382, and Asp-530. The DDXXD motif signature appears at 378 to 382 (DDMYD).

It belongs to the terpene synthase family. Tpsd subfamily. Mg(2+) serves as cofactor. Requires Mn(2+) as cofactor.

It localises to the plastid. The protein resides in the chloroplast. It catalyses the reaction (2E)-geranyl diphosphate = (1S,5S)-beta-pinene + diphosphate. It carries out the reaction (2E)-geranyl diphosphate = (1S,5S)-alpha-pinene + diphosphate. The protein operates within terpene metabolism; oleoresin biosynthesis. Its pathway is secondary metabolite biosynthesis; terpenoid biosynthesis. Its function is as follows. Monoterpene synthase (TPS) involved in the biosynthesis of monoterpene natural products included in conifer oleoresin secretions and volatile emissions; these compounds contribute to biotic and abiotic stress defense against herbivores and pathogens. Catalyzes the conversion of (2E)-geranyl diphosphate (GPP) to (-)-beta-pinene and, to a lower extent, to (-)-alpha-pinene. The polypeptide is (-)-beta-pinene synthase 2, chloroplastic (Pinus banksiana (Jack pine)).